The following is a 326-amino-acid chain: D-alanine--D-alanine ligase (326 aa).

In terms of domain architecture, ATP-grasp spans 112–312 (KRIWRFEGLP…YENLCLGILA (201 aa)). Position 138–193 (138–193 (LQALGAPMIVKPSREGSTIGLTKVWTAEECDQAYVLASRYDPEVLCEEFIEGDETT)) interacts with ATP. 3 residues coordinate Mg(2+): Asp265, Glu279, and Asn281.

The protein belongs to the D-alanine--D-alanine ligase family. Requires Mg(2+) as cofactor. The cofactor is Mn(2+).

It localises to the cytoplasm. It catalyses the reaction 2 D-alanine + ATP = D-alanyl-D-alanine + ADP + phosphate + H(+). It participates in cell wall biogenesis; peptidoglycan biosynthesis. In terms of biological role, cell wall formation. The chain is D-alanine--D-alanine ligase from Delftia acidovorans (strain DSM 14801 / SPH-1).